A 75-amino-acid chain; its full sequence is Tetrahydromethanopterin S-methyltransferase subunit F (75 aa).

A helical transmembrane segment spans residues F53–L73.

Belongs to the MtrF family. As to quaternary structure, the complex is composed of 8 subunits; MtrA, MtrB, MtrC, MtrD, MtrE, MtrF, MtrG and MtrH.

It is found in the cell membrane. The catalysed reaction is 5-methyl-5,6,7,8-tetrahydromethanopterin + coenzyme M + 2 Na(+)(in) = 5,6,7,8-tetrahydromethanopterin + methyl-coenzyme M + 2 Na(+)(out). Its pathway is one-carbon metabolism; methanogenesis from CO(2); methyl-coenzyme M from 5,10-methylene-5,6,7,8-tetrahydromethanopterin: step 2/2. Its function is as follows. Part of a complex that catalyzes the formation of methyl-coenzyme M and tetrahydromethanopterin from coenzyme M and methyl-tetrahydromethanopterin. This is an energy-conserving, sodium-ion translocating step. The polypeptide is Tetrahydromethanopterin S-methyltransferase subunit F (Methanopyrus kandleri (strain AV19 / DSM 6324 / JCM 9639 / NBRC 100938)).